The chain runs to 701 residues: ABC transporter G family member 23 (701 aa).

The 231-residue stretch at 7-237 folds into the ABC transporter domain; the sequence is INLNNVSRSY…YECSLLEDVY (231 aa). 39 to 46 contacts ATP; sequence GSSGSGKT. The next 6 helical transmembrane spans lie at 335–355, 493–513, 541–561, 574–596, 608–628, and 665–685; these read FPLVFEIISPSLLITLFFLAI, FLAPAMICIITYVHCMNFLSI, HILAHIPILLVQFSIQLLIAV, LIYLFFILINTVGMCQGILISLI, LAIFICSLCMAGIIWPTEAII, and LIIIISYIIGTFSLIVISTPI. The ABC transmembrane type-2 domain maps to 459–686; that stretch reads FQKAFNKIAN…SLIVISTPIG (228 aa).

Belongs to the ABC transporter superfamily. ABCG family.

It is found in the membrane. This Dictyostelium discoideum (Social amoeba) protein is ABC transporter G family member 23 (abcG23).